The chain runs to 200 residues: Transcription elongation factor A protein-like 5 (200 aa).

Composition is skewed to basic and acidic residues over residues 1–49 (MEKF…KLEV), 61–85 (GEGK…KPDS), 94–106 (RAAE…DYVP), 114–153 (DRGT…EELR), and 190–200 (GQKDLEDAPFV). The interval 1–200 (MEKFYKENEG…QKDLEDAPFV (200 aa)) is disordered.

The protein belongs to the TFS-II family. TFA subfamily.

It is found in the nucleus. Its function is as follows. May be involved in transcriptional regulation. This Mus musculus (Mouse) protein is Transcription elongation factor A protein-like 5 (Tceal5).